Consider the following 116-residue polypeptide: MSSAAEQAMPIEFTEQAASKVGKLIAEEENPNLKLRVYVTGGGCSGFQYGFTFDEKKNPGDMEIEKNGVTLLVDPMSLQYLMGGVVSYEEGLQGSRFFVDNPNATTTCGCGSSFSV.

Residues Cys44, Cys108, and Cys110 each coordinate iron-sulfur cluster.

The protein belongs to the HesB/IscA family. Homodimer. Iron-sulfur cluster is required as a cofactor.

Required for insertion of 4Fe-4S clusters for at least IspG. The sequence is that of Iron-sulfur cluster insertion protein ErpA from Idiomarina loihiensis (strain ATCC BAA-735 / DSM 15497 / L2-TR).